The chain runs to 785 residues: Endonuclease MutS2 (785 aa).

An ATP-binding site is contributed by 332–339 (GPNTGGKT). In terms of domain architecture, Smr spans 710–785 (IDLRGLDAEE…GDGATIVELK (76 aa)).

Belongs to the DNA mismatch repair MutS family. MutS2 subfamily. Homodimer. Binds to stalled ribosomes, contacting rRNA.

In terms of biological role, endonuclease that is involved in the suppression of homologous recombination and thus may have a key role in the control of bacterial genetic diversity. Acts as a ribosome collision sensor, splitting the ribosome into its 2 subunits. Detects stalled/collided 70S ribosomes which it binds and splits by an ATP-hydrolysis driven conformational change. Acts upstream of the ribosome quality control system (RQC), a ribosome-associated complex that mediates the extraction of incompletely synthesized nascent chains from stalled ribosomes and their subsequent degradation. Probably generates substrates for RQC. This chain is Endonuclease MutS2, found in Clostridium botulinum (strain Eklund 17B / Type B).